Consider the following 347-residue polypeptide: Heat-inducible transcription repressor HrcA (347 aa).

Belongs to the HrcA family.

In terms of biological role, negative regulator of class I heat shock genes (grpE-dnaK-dnaJ and groELS operons). Prevents heat-shock induction of these operons. This Sorangium cellulosum (strain So ce56) (Polyangium cellulosum (strain So ce56)) protein is Heat-inducible transcription repressor HrcA.